We begin with the raw amino-acid sequence, 399 residues long: Enoyl-[acyl-carrier-protein] reductase [NADH] (399 aa).

NAD(+) is bound by residues 48–53 (GASTGY), 74–75 (FE), 111–112 (DA), and 139–140 (LA). Tyrosine 225 is a binding site for substrate. Tyrosine 235 (proton donor) is an active-site residue. NAD(+) contacts are provided by residues lysine 244 and 273 to 275 (VVT).

It belongs to the TER reductase family. Monomer.

It carries out the reaction a 2,3-saturated acyl-[ACP] + NAD(+) = a (2E)-enoyl-[ACP] + NADH + H(+). It functions in the pathway lipid metabolism; fatty acid biosynthesis. Functionally, involved in the final reduction of the elongation cycle of fatty acid synthesis (FAS II). Catalyzes the reduction of a carbon-carbon double bond in an enoyl moiety that is covalently linked to an acyl carrier protein (ACP). This chain is Enoyl-[acyl-carrier-protein] reductase [NADH], found in Serratia proteamaculans (strain 568).